We begin with the raw amino-acid sequence, 260 residues long: Adenosylcobinamide-GDP ribazoletransferase (260 aa).

Transmembrane regions (helical) follow at residues 42–62, 64–84, 117–137, 144–164, 192–212, 214–234, and 240–260; these read PLAG…ANAI, LPPL…TGAL, FAAL…MAII, YALL…LAFW, GLGL…VALI, ALVL…AKIG, and TLGA…VMAL.

This sequence belongs to the CobS family. It depends on Mg(2+) as a cofactor.

The protein resides in the cell inner membrane. It carries out the reaction alpha-ribazole + adenosylcob(III)inamide-GDP = adenosylcob(III)alamin + GMP + H(+). The catalysed reaction is alpha-ribazole 5'-phosphate + adenosylcob(III)inamide-GDP = adenosylcob(III)alamin 5'-phosphate + GMP + H(+). Its pathway is cofactor biosynthesis; adenosylcobalamin biosynthesis; adenosylcobalamin from cob(II)yrinate a,c-diamide: step 7/7. Joins adenosylcobinamide-GDP and alpha-ribazole to generate adenosylcobalamin (Ado-cobalamin). Also synthesizes adenosylcobalamin 5'-phosphate from adenosylcobinamide-GDP and alpha-ribazole 5'-phosphate. The chain is Adenosylcobinamide-GDP ribazoletransferase from Brucella abortus (strain S19).